A 576-amino-acid polypeptide reads, in one-letter code: Vesicular glutamate transporter 1 (576 aa).

Residues 1-63 (MEFRKEEFKK…CTCFGLPRRY (63 aa)) lie on the Cytoplasmic side of the membrane. Residues 64–84 (IIAIMSGLGFCISFGIRCNLG) traverse the membrane as a helical segment. At 85 to 116 (VAIVSMVNNNTVYKGNKLVIEQAQFNWDPETV) the chain is on the vesicular side. N93 is a glycosylation site (N-linked (GlcNAc...) asparagine). The chain crosses the membrane as a helical span at residues 117–137 (GMIHGSFFWGYIVTQIPGGYI). Residues 138 to 140 (CQK) are Cytoplasmic-facing. A helical transmembrane segment spans residues 141-161 (FAANRVFGFAIVATSTLNMLI). The Vesicular segment spans residues 162–168 (PSAARVH). Residues 169 to 189 (FACVICVRILQGLVEGVTYPA) traverse the membrane as a helical segment. The Cytoplasmic segment spans residues 190–208 (CHGIWSKWAPPLERSRLAT). A helical transmembrane segment spans residues 209–229 (TAFCGSYAGAVVAMPLAGVLV). The Vesicular segment spans residues 230–236 (QYSGWSS). A helical transmembrane segment spans residues 237 to 257 (VFYVYGSFGITWYMFWILVSY). At 258–297 (ESPAQHPTISEEERKYIEESIGESTGFMNPMAKFKAPWRK) the chain is on the cytoplasmic side. Residues 298–320 (FFTSMPVYAIIVANFCRSWTFYL) form a helical membrane-spanning segment. The Vesicular segment spans residues 321 to 341 (LLISQPAYFEEVFGFAISKVG). Residues 342–362 (LLSALPHLVMTIIVPIGGQIA) form a helical membrane-spanning segment. The Cytoplasmic portion of the chain corresponds to 363–378 (DFLRTKRIMSTTNVRK). A helical membrane pass occupies residues 379–399 (MMNCGGFGMEATLLLVVGYSH). At 400 to 401 (SR) the chain is on the vesicular side. A helical membrane pass occupies residues 402 to 422 (GVAISFLVLAVGFSGFAISGF). Residues 423 to 435 (NVNHLDIAPRYAS) lie on the Cytoplasmic side of the membrane. The helical transmembrane segment at 436–456 (ILMGISNGVGTLSGMVCPLIV) threads the bilayer. The Vesicular segment spans residues 457 to 469 (GAMTKHKTREEWQ). A helical membrane pass occupies residues 470–490 (YVFLIASLVHYGGVVFYGIFA). At 491 to 576 (SGEKQPWAEP…YGTVAERDLS (86 aa)) the chain is on the cytoplasmic side. The segment at 517–552 (ADESEEQTQAHGGYGSYGATQTTSQQNGGWATDWEK) is disordered. Positions 534 to 545 (GATQTTSQQNGG) are enriched in polar residues.

This sequence belongs to the major facilitator superfamily. Sodium/anion cotransporter family. VGLUT subfamily.

It is found in the cytoplasmic vesicle. The protein localises to the secretory vesicle. It localises to the synaptic vesicle membrane. The protein resides in the cell membrane. Its subcellular location is the synapse. It is found in the synaptosome. The catalysed reaction is L-glutamate(out) = L-glutamate(in). It catalyses the reaction chloride(in) = chloride(out). It carries out the reaction 3 Na(+)(out) + phosphate(out) = 3 Na(+)(in) + phosphate(in). The enzyme catalyses phosphate(in) = phosphate(out). The catalysed reaction is K(+)(in) + H(+)(out) = K(+)(out) + H(+)(in). With respect to regulation, chloride channel activity is allosterically activated by lumenal H(+) and Cl(-) leading to synaptic vesicles acidification. The L-glutamate transport activity is allosterically activated by lumenal H(+) and Cl(-). The allosteric activation by H(+) efficiently prevents non-vesicular efflux across the plasma membrane, thereby restricting L-glutamate transport activity to acidic membranes such as synaptic vesicles. Multifunctional transporter that transports L-glutamate as well as multiple ions such as chloride, proton, potassium, sodium and phosphate. At the synaptic vesicle membrane, mainly functions as an uniporter which transports preferentially L-glutamate but also phosphate from the cytoplasm into synaptic vesicles at presynaptic nerve terminals of excitatory neural cells. The L-glutamate or phosphate uniporter activity is electrogenic and is driven by the proton electrochemical gradient, mainly by the electrical gradient established by the vacuolar H(+)-ATPase across the synaptic vesicle membrane. In addition, functions as a chloride channel that allows a chloride permeation through the synaptic vesicle membrane that affects the proton electrochemical gradient and promotes synaptic vesicles acidification. Moreover, may function as a K(+)/H(+) antiport allowing to maintain the electrical gradient and to decrease chemical gradient and therefore sustain vesicular glutamate uptake. The vesicular K(+)/H(+) antiport activity is electroneutral. At the plasma membrane, following exocytosis, functions as a symporter of Na(+) and phosphate from the extracellular space to the cytoplasm allowing synaptic phosphate homeostasis regulation. The symporter activity is driven by an inside negative membrane potential and is electrogenic. Is necessary for synaptic signaling of visual-evoked responses from photoreceptors. This Xenopus laevis (African clawed frog) protein is Vesicular glutamate transporter 1.